The following is a 380-amino-acid chain: Beta sliding clamp (380 aa).

The protein belongs to the beta sliding clamp family. Forms a ring-shaped head-to-tail homodimer around DNA which binds and tethers DNA polymerases and other proteins to the DNA. The DNA replisome complex has a single clamp-loading complex (3 tau and 1 each of delta, delta', psi and chi subunits) which binds 3 Pol III cores (1 core on the leading strand and 2 on the lagging strand) each with a beta sliding clamp dimer. Additional proteins in the replisome are other copies of gamma, psi and chi, Ssb, DNA helicase and RNA primase.

It localises to the cytoplasm. Confers DNA tethering and processivity to DNA polymerases and other proteins. Acts as a clamp, forming a ring around DNA (a reaction catalyzed by the clamp-loading complex) which diffuses in an ATP-independent manner freely and bidirectionally along dsDNA. Initially characterized for its ability to contact the catalytic subunit of DNA polymerase III (Pol III), a complex, multichain enzyme responsible for most of the replicative synthesis in bacteria; Pol III exhibits 3'-5' exonuclease proofreading activity. The beta chain is required for initiation of replication as well as for processivity of DNA replication. The polypeptide is Beta sliding clamp (dnaN) (Mycoplasma pneumoniae (strain ATCC 29342 / M129 / Subtype 1) (Mycoplasmoides pneumoniae)).